The sequence spans 247 residues: Segregation and condensation protein A (247 aa).

This sequence belongs to the ScpA family. Component of a cohesin-like complex composed of ScpA, ScpB and the Smc homodimer, in which ScpA and ScpB bind to the head domain of Smc. The presence of the three proteins is required for the association of the complex with DNA.

It is found in the cytoplasm. Participates in chromosomal partition during cell division. May act via the formation of a condensin-like complex containing Smc and ScpB that pull DNA away from mid-cell into both cell halves. This Mycoplasma mobile (strain ATCC 43663 / 163K / NCTC 11711) (Mesomycoplasma mobile) protein is Segregation and condensation protein A.